The chain runs to 242 residues: Zinc finger protein ZOP1 (242 aa).

The segment at 11 to 42 (KWCEFCKIWIQNNPTSIRNHDLGKRHRECVDK) adopts a Matrin-type zinc-finger fold. The stretch at 42–71 (KKLTDMRERSAAKDKELKKNEKLLQQIEAK) forms a coiled coil. Positions 154-242 (VKKPVSSSGA…PLLGLYNRPF (89 aa)) are disordered. A compositionally biased stretch (low complexity) spans 155–172 (KKPVSSSGAGPSVGKPPG). Residues 201 to 233 (RQDEKPKKVSAEEKAALKAREAARKRVEDREKP) show a composition bias toward basic and acidic residues.

In terms of assembly, component of a pre-mRNA splicing complex. Interacts with STA1. Interacts with PRP31.

Its subcellular location is the nucleus. It is found in the cajal body. Its function is as follows. Nucleic acid-binding protein that promotes Pol IV-dependent small interfering RNA (siRNA) accumulation, DNA methylation and transcriptional silencing. May possess both RNA-directed DNA methylation (RdDM)-dependent and -independent roles in transcriptional silencing. Acts as a pre-mRNA splicing factor that associates with several typical components of the splicing machinery as well as with Pol II. The polypeptide is Zinc finger protein ZOP1 (Arabidopsis thaliana (Mouse-ear cress)).